The sequence spans 197 residues: Stanniocalcin-2 (197 aa).

Positions Thr1 to Arg20 are disordered.

This sequence belongs to the stanniocalcin family. As to quaternary structure, homodimer; disulfide-linked.

The protein localises to the secreted. Has an anti-hypocalcemic action on calcium and phosphate homeostasis. The sequence is that of Stanniocalcin-2 (STC2) from Cavia porcellus (Guinea pig).